The following is a 713-amino-acid chain: Catalase-peroxidase (713 aa).

The segment at residues 77–200 (WHSAGTYRTT…LGATVMGLIY (124 aa)) is a cross-link (tryptophyl-tyrosyl-methioninium (Trp-Tyr) (with M-226)). Residue histidine 78 is the Proton acceptor of the active site. A cross-link (tryptophyl-tyrosyl-methioninium (Tyr-Met) (with W-77)) is located at residues 200 to 226 (YVNPEGPDGEPDLEGSAANIRESFGRM). Histidine 241 is a heme b binding site.

Belongs to the peroxidase family. Peroxidase/catalase subfamily. As to quaternary structure, homodimer or homotetramer. The cofactor is heme b. Formation of the three residue Trp-Tyr-Met cross-link is important for the catalase, but not the peroxidase activity of the enzyme.

It carries out the reaction H2O2 + AH2 = A + 2 H2O. The catalysed reaction is 2 H2O2 = O2 + 2 H2O. Its function is as follows. Bifunctional enzyme with both catalase and broad-spectrum peroxidase activity. The sequence is that of Catalase-peroxidase from Natronomonas pharaonis (strain ATCC 35678 / DSM 2160 / CIP 103997 / JCM 8858 / NBRC 14720 / NCIMB 2260 / Gabara) (Halobacterium pharaonis).